Consider the following 216-residue polypeptide: Uracil phosphoribosyltransferase (216 aa).

5-phospho-alpha-D-ribose 1-diphosphate is bound by residues Arg81, Arg106, and 135–143 (DPMLATGSS). Uracil is bound by residues Ile200 and 205–207 (GDA). 5-phospho-alpha-D-ribose 1-diphosphate is bound at residue Asp206.

This sequence belongs to the UPRTase family. Mg(2+) serves as cofactor.

It catalyses the reaction UMP + diphosphate = 5-phospho-alpha-D-ribose 1-diphosphate + uracil. It participates in pyrimidine metabolism; UMP biosynthesis via salvage pathway; UMP from uracil: step 1/1. Its activity is regulated as follows. Allosterically activated by GTP. Catalyzes the conversion of uracil and 5-phospho-alpha-D-ribose 1-diphosphate (PRPP) to UMP and diphosphate. This Porphyromonas gingivalis (strain ATCC 33277 / DSM 20709 / CIP 103683 / JCM 12257 / NCTC 11834 / 2561) protein is Uracil phosphoribosyltransferase (upp).